The chain runs to 177 residues: Large ribosomal subunit protein uL6 (177 aa).

Belongs to the universal ribosomal protein uL6 family. As to quaternary structure, part of the 50S ribosomal subunit.

This protein binds to the 23S rRNA, and is important in its secondary structure. It is located near the subunit interface in the base of the L7/L12 stalk, and near the tRNA binding site of the peptidyltransferase center. This chain is Large ribosomal subunit protein uL6, found in Psychromonas ingrahamii (strain DSM 17664 / CCUG 51855 / 37).